A 355-amino-acid chain; its full sequence is MSEDKMNGRSIRINRLPATIVAILLTFVLVYFLNFHQEERPAIYGMLRSENPSRVNLRKMLIAAIQAAQRGGLEVLDVARSRQLKERSKGKTDEGVNDPFTDADGRSHCVMKQGLQRIFPRVQIFSEEDKEHCKQAHGYDLDPTVLHETAQIPDVTVNAQDVTVWVDPLDATKEFTEELYEYVTTMVCVAVAGRPIIGVIHSPFNGQTAWAWVGNSMSEYLSNLHPQHSPNNQAPIITVSRSHTAGAKDLARGIFGENVSLLTAAGAGYKVLQVVANNATAYLHTSKIKKWDICAGDAILHALGGTMTTLNDQLINYGPEESPVNTEGLLATLEQHDEYMDKLSKYREAHNGKLA.

A helical membrane pass occupies residues 16-36 (LPATIVAILLTFVLVYFLNFH). Positions 127, 167, 169, 170, and 292 each coordinate Mg(2+). Position 127 (Glu127) interacts with substrate. Substrate is bound by residues 169–172 (LDAT) and Asp292.

It belongs to the inositol monophosphatase superfamily. Mg(2+) is required as a cofactor.

It is found in the membrane. It carries out the reaction a myo-inositol phosphate + H2O = myo-inositol + phosphate. It functions in the pathway polyol metabolism; myo-inositol biosynthesis; myo-inositol from D-glucose 6-phosphate: step 2/2. The polypeptide is Putative inositol monophosphatase 3 (Drosophila melanogaster (Fruit fly)).